The sequence spans 453 residues: uncharacterized protein (453 aa).

The protein to S.faecalis plasmid PAM373 EP0012.

This is an uncharacterized protein from Listeria innocua serovar 6a (strain ATCC BAA-680 / CLIP 11262).